A 293-amino-acid polypeptide reads, in one-letter code: Chorion protein S36 (293 aa).

The N-terminal stretch at M1 to A20 is a signal peptide. The span at Q235–Q253 shows a compositional bias: polar residues. Positions Q235–Y293 are disordered.

Belongs to the chorion protein S36 family.

It is found in the secreted. Its function is as follows. Chorion membrane (egg shell) protein; protects the egg from the environment. This is Chorion protein S36 (Cp36) from Drosophila virilis (Fruit fly).